The chain runs to 330 residues: G-protein coupled bile acid receptor 1 (330 aa).

Topologically, residues 1–19 (MTPNSTGEVPGPIPRGALE) are extracellular. N-linked (GlcNAc...) asparagine glycosylation is present at asparagine 4. A helical membrane pass occupies residues 20–40 (LSLALASLIIAANLLLALGIA). Over 41–50 (CDRRLRSPPA) the chain is Cytoplasmic. Residues 51 to 71 (GCFFLSLLLAGLLTGLALPTL) traverse the membrane as a helical segment. Residues 72–85 (PGLWRQSHRGYWSC) lie on the Extracellular side of the membrane. Cysteine 85 and cysteine 155 are joined by a disulfide. A helical membrane pass occupies residues 86 to 106 (LLVYLAPNFSFLSLLANLLLV). Residues 107–125 (HGERYVAVLRPLQPPGSIR) lie on the Cytoplasmic side of the membrane. The chain crosses the membrane as a helical span at residues 126–146 (LALLLTWTGPLLFASLPALGW). Residues 147–169 (NHWGPEANCSSQTIFPAPYLYLE) are Extracellular-facing. Residue asparagine 154 is glycosylated (N-linked (GlcNAc...) asparagine). The helical transmembrane segment at 170–190 (VYGLLLPAVGAAALLSAHVLL) threads the bilayer. At 191–230 (AAHRQLQDIRRLERAVCRDAPSALARALTWRQARAQAGAT) the chain is on the cytoplasmic side. A helical membrane pass occupies residues 231–251 (LLFGLCWGPYVATLFLSVLAY). Over 252-261 (EQRPPLGPGT) the chain is Extracellular. The helical transmembrane segment at 262–282 (LLSLLSLGSASAAAVPVAMGL) threads the bilayer. Over 283–330 (GDHRYTAPWRAAARRWLRGLRGRGSQASPGPSTAYHTSSQSSVDVDLN) the chain is Cytoplasmic. Residues 304-330 (GRGSQASPGPSTAYHTSSQSSVDVDLN) form a disordered region. The segment covering 307 to 330 (SQASPGPSTAYHTSSQSSVDVDLN) has biased composition (polar residues).

This sequence belongs to the G-protein coupled receptor 1 family. As to expression, expressed at high level in spleen. Expressed at lower level in thymus, heart, lung, liver, kidney, ileum, blood and adherent alveolar macrophage cells.

It is found in the cell membrane. Its function is as follows. Receptor for bile acid. Bile-acid binding induces its internalization, activation of extracellular signal-regulated kinase and intracellular cAMP production. May be involved in the suppression of macrophage functions by bile acids. Involved in bile acid promoted GLP1R secretion. The protein is G-protein coupled bile acid receptor 1 (GPBAR1) of Oryctolagus cuniculus (Rabbit).